Reading from the N-terminus, the 455-residue chain is L-serine dehydratase (455 aa).

This sequence belongs to the iron-sulfur dependent L-serine dehydratase family. It depends on [4Fe-4S] cluster as a cofactor.

It catalyses the reaction L-serine = pyruvate + NH4(+). Its pathway is carbohydrate biosynthesis; gluconeogenesis. The sequence is that of L-serine dehydratase (sdaA) from Haemophilus influenzae (strain ATCC 51907 / DSM 11121 / KW20 / Rd).